The chain runs to 160 residues: Protein CrtK (160 aa).

5 consecutive transmembrane segments (helical) span residues 3-23 (LTLF…GAIF), 37-57 (WVPP…LMSI), 76-96 (LAFW…FFGL), 101-121 (GGML…VLFW), and 129-149 (LMFV…FSVW).

This sequence belongs to the TspO/BZRP family.

It is found in the cell inner membrane. Its pathway is carotenoid biosynthesis; spheroidene biosynthesis. In Rhodobacter capsulatus (strain ATCC BAA-309 / NBRC 16581 / SB1003), this protein is Protein CrtK (crtK).